The primary structure comprises 170 residues: Myelin-associated oligodendrocyte basic protein (170 aa).

The segment at 69 to 170 (SRRATSPQRP…GSPTRAPRFW (102 aa)) is disordered. The segment covering 82-92 (PAASPVVVRAP) has biased composition (low complexity). 3 positions are modified to phosphoserine: Ser-85, Ser-98, and Ser-107. A run of 2 repeats spans residues 93–101 (PAKPKSPLM) and 105–110 (PRSPPR). A 3 X 9 AA approximate tandem repeats region spans residues 93–115 (PAKPKSPLMPAKPRSPPRPAKPR). A 3; half-length repeat occupies 111–115 (PAKPR). A compositionally biased stretch (basic and acidic residues) spans 118–130 (SRTERQPRPRPEV). The span at 138–151 (KPPQKSKQPARSSP) shows a compositional bias: low complexity.

Its subcellular location is the cytoplasm. The protein resides in the perinuclear region. In terms of biological role, may play a role in compacting or stabilizing the myelin sheath possibly by binding the negatively charged acidic phospholipids of the cytoplasmic membrane. The protein is Myelin-associated oligodendrocyte basic protein (Mobp) of Mus musculus (Mouse).